The sequence spans 77 residues: MPRRVLQGVVISSKADKTVTVKVERKFKHPIYKKFVKVSKKYAAHDSENKYQEGDKVSIIESRPISKTKTWIVVNGE.

The protein belongs to the universal ribosomal protein uS17 family. Part of the 30S ribosomal subunit.

One of the primary rRNA binding proteins, it binds specifically to the 5'-end of 16S ribosomal RNA. The chain is Small ribosomal subunit protein uS17 from Rickettsia akari (strain Hartford).